Consider the following 397-residue polypeptide: L-aspartate--L-methionine ligase (397 aa).

The region spanning Val-131–Lys-347 is the ATP-grasp domain. 11 residues coordinate ADP: Lys-136, Val-171, Lys-173, Gly-183, Val-186, Ile-188, Glu-215, Gln-216, Ile-218, Asn-223, and Thr-246. Asp-288 is a binding site for Mg(2+). Leu-290 and Ile-300 together coordinate ADP. Residue Asp-301 participates in Mg(2+) binding. Arg-305 serves as the catalytic Critical for catalysis.

Primarily a monomer in solution. Minor homodimer formation. The cofactor is Mg(2+).

It catalyses the reaction L-aspartate + L-methionine + ATP = L-aspartyl-L-methionine + ADP + phosphate + H(+). The protein operates within amino-acid metabolism. In terms of biological role, L-amino acid ligase, which preferentially catalyzes the formation of L-aspartyl-L-methionine dipeptide from L-aspartate and L-methionine in the presence of ATP. Less active with L-asparagine and L-methionine as substrates. Less active with L-aspartate and either L-phenylalanine, L-valine, L-leucine or L-isoleucine as substrates. Decreased activity when L-methionine is substituted with seleno-DL-methionine, L-homocysteine, L-methionine sulfoxide, L-methionine sulfoximine and o-acetyl-L-serine. Decreased activity with acetylation of L-methionine amino group. Decreased activity by modification of L-methionine carboxylate to L-methionine methyl ester. No activity when L-methionine is substituted with L-homoserine. No activity with formylation of L-methionine amino group. No activity by modification of L-methionine carboxylate to L-methionine-glycine carboxylate. No activity when L-aspartate substrate is replaced by analogs such as L-homoserine, DL-aspartate beta-methyl ester, L-glutamate or o-acetyl-L-serine. No activity when L-aspartate amino and alpha-carboxylate groups are modified to L-malate, glycine-L-aspartate, L-aspartate-glycine or N-carbamoyl-DL-aspartate. No activity with L-methionine or L-aspartate as sole substrates. No activity in presence of other nucleoside triphosphates including GTP, CTP, UTP, TTP or ITP. Involved in sulfur amino acid metabolism. The sequence is that of L-aspartate--L-methionine ligase from Staphylococcus aureus (strain NCTC 8325 / PS 47).